Here is a 210-residue protein sequence, read N- to C-terminus: Vacuolar protein sorting-associated protein 28 homolog (210 aa).

One can recognise a VPS28 N-terminal domain in the interval 1–106; the sequence is MSSQNANLMR…REGRPITVKD (106 aa). Residues 110–206 form the VPS28 C-terminal domain; the sequence is NVLKHIASIV…AYQAFNKALN (97 aa).

This sequence belongs to the VPS28 family. Component of the ESCRT-I complex (endosomal sorting complex required for transport I). In terms of tissue distribution, expressed in embryos.

It is found in the endosome. Its function is as follows. Component of the ESCRT-I complex, a regulator of vesicular trafficking process. This chain is Vacuolar protein sorting-associated protein 28 homolog (vps-28), found in Caenorhabditis elegans.